The following is a 60-amino-acid chain: Metallothionein A (60 aa).

Residues 1–28 (MDPCECSKSGTCNCGGSCTCTNCSCKSC) are beta. A divalent metal cation contacts are provided by cysteine 4, cysteine 6, cysteine 12, cysteine 14, cysteine 18, cysteine 20, cysteine 23, cysteine 25, cysteine 28, cysteine 32, cysteine 33, cysteine 35, cysteine 36, cysteine 40, cysteine 43, cysteine 47, cysteine 49, cysteine 54, cysteine 58, and cysteine 59. An alpha region spans residues 29–60 (KKSCCPCCPSGCTKCASGCVCKGKTCDTSCCQ).

Belongs to the metallothionein superfamily. Type 1 family.

Its function is as follows. Metallothioneins have a high content of cysteine residues that bind various heavy metals. The polypeptide is Metallothionein A (mta) (Chionodraco rastrospinosus (Ocellated icefish)).